The sequence spans 235 residues: Large ribosomal subunit protein uL1 (235 aa).

This sequence belongs to the universal ribosomal protein uL1 family. In terms of assembly, part of the 50S ribosomal subunit.

Functionally, binds directly to 23S rRNA. The L1 stalk is quite mobile in the ribosome, and is involved in E site tRNA release. Protein L1 is also a translational repressor protein, it controls the translation of the L11 operon by binding to its mRNA. In Thermobifida fusca (strain YX), this protein is Large ribosomal subunit protein uL1.